The chain runs to 129 residues: Glycine cleavage system H protein (129 aa).

Residues 24-106 (TYTVGITEHA…YTGGWIFKIK (83 aa)) form the Lipoyl-binding domain. Lys65 carries the post-translational modification N6-lipoyllysine.

This sequence belongs to the GcvH family. The glycine cleavage system is composed of four proteins: P, T, L and H. The cofactor is (R)-lipoate.

The glycine cleavage system catalyzes the degradation of glycine. The H protein shuttles the methylamine group of glycine from the P protein to the T protein. This is Glycine cleavage system H protein from Salmonella choleraesuis (strain SC-B67).